Here is a 224-residue protein sequence, read N- to C-terminus: tRNA (guanine-N(7)-)-methyltransferase (224 aa).

S-adenosyl-L-methionine is bound by residues E54, E79, E106, and D129. Residue D129 is part of the active site. Substrate contacts are provided by K133 and D165.

This sequence belongs to the class I-like SAM-binding methyltransferase superfamily. TrmB family.

It catalyses the reaction guanosine(46) in tRNA + S-adenosyl-L-methionine = N(7)-methylguanosine(46) in tRNA + S-adenosyl-L-homocysteine. It participates in tRNA modification; N(7)-methylguanine-tRNA biosynthesis. Functionally, catalyzes the formation of N(7)-methylguanine at position 46 (m7G46) in tRNA. The protein is tRNA (guanine-N(7)-)-methyltransferase of Chlamydia trachomatis serovar D (strain ATCC VR-885 / DSM 19411 / UW-3/Cx).